Here is a 229-residue protein sequence, read N- to C-terminus: Large ribosomal subunit protein uL1 (229 aa).

Belongs to the universal ribosomal protein uL1 family. In terms of assembly, part of the 50S ribosomal subunit.

In terms of biological role, binds directly to 23S rRNA. The L1 stalk is quite mobile in the ribosome, and is involved in E site tRNA release. Functionally, protein L1 is also a translational repressor protein, it controls the translation of the L11 operon by binding to its mRNA. The protein is Large ribosomal subunit protein uL1 of Pelagibacter ubique (strain HTCC1062).